The chain runs to 226 residues: X-linked lymphocyte-regulated protein 3C (226 aa).

The segment at 1–66 is disordered; the sequence is MSSRKRKATD…QARKEKQDLV (66 aa). Residues 8-18 are compositionally biased toward basic and acidic residues; the sequence is ATDTAGRHSRM. Polar residues predominate over residues 21 to 30; the sequence is NLSSDDSQNP. 2 stretches are compositionally biased toward basic and acidic residues: residues 39–48 and 56–66; these read EVLDAGREDI and QQARKEKQDLV. A coiled-coil region spans residues 155-210; that stretch reads ESLTLQKNRMEEFKSLCEKYLEKLEVLRDSRGNSIAEELRRLIATLEIKLLMLHNQ.

It belongs to the XLR/SYCP3 family. In terms of tissue distribution, expressed in lymphoid cells.

This Mus musculus (Mouse) protein is X-linked lymphocyte-regulated protein 3C (Xlr3c).